The primary structure comprises 501 residues: L-ornithine N(5)-monooxygenase (501 aa).

The segment at 1–31 is disordered; that stretch reads MESVERKSESSYLGMRNMQPEQRLSLDPPRL. FAD is bound by residues 83–91 and Gln-102; that span reads ERQKQFAWH. Lys-107 provides a ligand contact to substrate. Position 168 (Val-168) interacts with FAD. NADP(+) contacts are provided by residues 254–257 and Arg-279; that span reads SGQS. Substrate-binding positions include 293–296 and Asn-323; that span reads NEIF. NADP(+) is bound at residue 323-325; it reads NYS. The disordered stretch occupies residues 366–390; sequence EHHGPQSRMRIHLKSSKPESEGAAN. Basic and acidic residues predominate over residues 381-390; that stretch reads SKPESEGAAN. Residue 466 to 468 coordinates FAD; the sequence is SLL. Residue Ser-469 participates in substrate binding.

This sequence belongs to the lysine N(6)-hydroxylase/L-ornithine N(5)-oxygenase family. As to quaternary structure, homotetramer. FAD serves as cofactor.

The catalysed reaction is L-ornithine + NADPH + O2 = N(5)-hydroxy-L-ornithine + NADP(+) + H2O. It carries out the reaction L-ornithine + NADH + O2 = N(5)-hydroxy-L-ornithine + NAD(+) + H2O. It functions in the pathway siderophore biosynthesis; ferrichrome biosynthesis. Functionally, L-ornithine N(5)-monooxygenase; part of the siderophore biosynthetic pathway. Aspergillus fumigatus produces four types of siderophores, low-molecular-mass iron chelators, including excreted fusarinine C (FsC) and triacetylfusarinine C (TAFC) for iron uptake; and intacellular ferricrocin (FC) for hyphal and hydroxyferricrocin (HFC) for conidial iron distribution and storage. TAFC consists of three N(2)-acetyl-N(5)-anhydromevalonyl-N(5)-hydroxyornithine residues cyclically linked by ester bonds; FC is a cyclic hexapeptide with the structure Gly-Ser-Gly-(N(5)-acetyl-N(5)-hydroxyornithine)x3. The biosynthesis of all four siderophores depends on the hydroxylation of ornithine, catalyzed by the monooxygenase sidA. SidA is highly specific for its substrate, only hydrolyzing l-ornithine, and has preference for NADPH over NADH, NADPH playing a role in stabilization of the C4a-hydroperoxyflavin intermediate. Subsequently, the pathways for biosynthesis of extra- and intracellular siderophores split. For biosynthesis of extracellular siderophores, the transacylase sidF transfers anhydromevalonyl to N(5)-hydroxyornithine. The required anhydromevalonyl-CoA moiety is derived from mevalonate by CoA ligation and dehydration catalyzed by sidI and sidH respectively. The acetylation of N(5)-hydroxyornithine for FC biosynthesis involves the constitutively expressed sidL. FC is hydroxylated to HFC by an as yet uncharacterized enzyme during conidiation. Assembly of fusarinine C (FsC) and FC is catalyzed by two different nonribosomal peptide synthetases (NRPS), sidD and sidC respectively. Subsequently, sidG catalyzes N2-acetylation of FsC for forming TAFC. Both extra- and intracellular siderophores are crucial for growth during iron limitation and virulence. This chain is L-ornithine N(5)-monooxygenase, found in Aspergillus fumigatus (strain ATCC MYA-4609 / CBS 101355 / FGSC A1100 / Af293) (Neosartorya fumigata).